Reading from the N-terminus, the 136-residue chain is Large ribosomal subunit protein uL16 (136 aa).

It belongs to the universal ribosomal protein uL16 family. As to quaternary structure, part of the 50S ribosomal subunit.

Binds 23S rRNA and is also seen to make contacts with the A and possibly P site tRNAs. This chain is Large ribosomal subunit protein uL16, found in Shewanella pealeana (strain ATCC 700345 / ANG-SQ1).